Here is a 467-residue protein sequence, read N- to C-terminus: ATP-dependent protease ATPase subunit HslU (467 aa).

Residues Val-20, 62-67, Asp-280, Glu-345, and Arg-417 contribute to the ATP site; that span reads GVGKTE.

Belongs to the ClpX chaperone family. HslU subfamily. As to quaternary structure, a double ring-shaped homohexamer of HslV is capped on each side by a ring-shaped HslU homohexamer. The assembly of the HslU/HslV complex is dependent on binding of ATP.

Its subcellular location is the cytoplasm. In terms of biological role, ATPase subunit of a proteasome-like degradation complex; this subunit has chaperone activity. The binding of ATP and its subsequent hydrolysis by HslU are essential for unfolding of protein substrates subsequently hydrolyzed by HslV. HslU recognizes the N-terminal part of its protein substrates and unfolds these before they are guided to HslV for hydrolysis. The polypeptide is ATP-dependent protease ATPase subunit HslU (Enterococcus faecalis (strain ATCC 700802 / V583)).